A 579-amino-acid chain; its full sequence is Putative adenine deaminase OB0751 (579 aa).

This sequence belongs to the metallo-dependent hydrolases superfamily. Adenine deaminase family.

It catalyses the reaction adenine + H2O + H(+) = hypoxanthine + NH4(+). The protein is Putative adenine deaminase OB0751 of Oceanobacillus iheyensis (strain DSM 14371 / CIP 107618 / JCM 11309 / KCTC 3954 / HTE831).